Consider the following 217-residue polypeptide: 3-isopropylmalate dehydratase small subunit (217 aa).

Belongs to the LeuD family. LeuD type 1 subfamily. As to quaternary structure, heterodimer of LeuC and LeuD.

It catalyses the reaction (2R,3S)-3-isopropylmalate = (2S)-2-isopropylmalate. It functions in the pathway amino-acid biosynthesis; L-leucine biosynthesis; L-leucine from 3-methyl-2-oxobutanoate: step 2/4. Functionally, catalyzes the isomerization between 2-isopropylmalate and 3-isopropylmalate, via the formation of 2-isopropylmaleate. In Delftia acidovorans (strain DSM 14801 / SPH-1), this protein is 3-isopropylmalate dehydratase small subunit.